The sequence spans 1372 residues: DNA-directed RNA polymerase subunit beta (1372 aa).

This sequence belongs to the RNA polymerase beta chain family. As to quaternary structure, the RNAP catalytic core consists of 2 alpha, 1 beta, 1 beta' and 1 omega subunit. When a sigma factor is associated with the core the holoenzyme is formed, which can initiate transcription.

The catalysed reaction is RNA(n) + a ribonucleoside 5'-triphosphate = RNA(n+1) + diphosphate. In terms of biological role, DNA-dependent RNA polymerase catalyzes the transcription of DNA into RNA using the four ribonucleoside triphosphates as substrates. This chain is DNA-directed RNA polymerase subunit beta, found in Bradyrhizobium diazoefficiens (strain JCM 10833 / BCRC 13528 / IAM 13628 / NBRC 14792 / USDA 110).